Consider the following 403-residue polypeptide: Phosphopentomutase (403 aa).

Positions 13, 298, 303, 339, 340, and 351 each coordinate Mn(2+).

This sequence belongs to the phosphopentomutase family. The cofactor is Mn(2+).

The protein localises to the cytoplasm. The enzyme catalyses 2-deoxy-alpha-D-ribose 1-phosphate = 2-deoxy-D-ribose 5-phosphate. The catalysed reaction is alpha-D-ribose 1-phosphate = D-ribose 5-phosphate. The protein operates within carbohydrate degradation; 2-deoxy-D-ribose 1-phosphate degradation; D-glyceraldehyde 3-phosphate and acetaldehyde from 2-deoxy-alpha-D-ribose 1-phosphate: step 1/2. In terms of biological role, isomerase that catalyzes the conversion of deoxy-ribose 1-phosphate (dRib-1-P) and ribose 1-phosphate (Rib-1-P) to deoxy-ribose 5-phosphate (dRib-5-P) and ribose 5-phosphate (Rib-5-P), respectively. This chain is Phosphopentomutase, found in Streptococcus suis (strain 05ZYH33).